The sequence spans 563 residues: Calnexin homolog (563 aa).

Residues 1–23 form the signal peptide; it reads MRFNAAITGALVSSATLMGQAHA. Residues 24–493 are Lumenal-facing; the sequence is EETEKKADAT…PINAVKQVPE (470 aa). Aspartate 98 lines the Ca(2+) pocket. A disulfide bridge links cysteine 141 with cysteine 175. The an alpha-D-glucoside site is built by tyrosine 145, lysine 147, tyrosine 166, and aspartate 173. The N-linked (GlcNAc...) asparagine glycan is linked to asparagine 236. A disordered region spans residues 241–323; the sequence is EDFAPPVNPE…EKPEDWDDEE (83 aa). Residues 249-279 show a composition bias toward basic and acidic residues; it reads PEKEIDDPKDKKPADWVDEAKIPDPEAKKPD. A p domain (Extended arm) region spans residues 253 to 386; the sequence is IDDPKDKKPA…RKIPNPAYFE (134 aa). A compositionally biased stretch (acidic residues) spans 280–305; it reads DWDEDAPYEIVDEEATMPEDWLEDEP. The cysteines at positions 337 and 343 are disulfide-linked. Glutamate 402 contributes to the an alpha-D-glucoside binding site. Aspartate 413 contributes to the Ca(2+) binding site. A helical transmembrane segment spans residues 494 to 514; that stretch reads VAGGLGALLLTMILVIVGAVG. The Cytoplasmic segment spans residues 515–563; sequence ASSPAPAAAAKKGKEAASAAKEKASEAVSSAADTAKGAATKRNTRSSAQ. The tract at residues 521 to 563 is disordered; sequence AAAAKKGKEAASAAKEKASEAVSSAADTAKGAATKRNTRSSAQ. The segment covering 526-539 has biased composition (basic and acidic residues); that stretch reads KGKEAASAAKEKAS.

Belongs to the calreticulin family.

It is found in the endoplasmic reticulum membrane. Its function is as follows. Interacts with newly synthesized monoglucosylated glycoproteins in the endoplasmic reticulum. It may act in assisting protein assembly and/or in the retention within the ER of unassembled protein subunits. It seems to play a major role in the quality control apparatus of the ER by the retention of incorrectly folded proteins. This is Calnexin homolog from Aspergillus fumigatus (strain ATCC MYA-4609 / CBS 101355 / FGSC A1100 / Af293) (Neosartorya fumigata).